A 651-amino-acid polypeptide reads, in one-letter code: MSEKLYPVLPEAKKNTLIDNETYLEWYEESVSDPDGFWAKHGRRIDWFKPFTKVKNTDFNGDVTIKWYEDGVTNVSYNCIDRHLKSRGDKVAIIWEGDNPYIDKKITYRELYENVCRMANVLKKHGVKKGDRVTIYLPMIPEAAYAMLACARIGAVHSVVFAGFSPEALAGRIVDCESTFVITADEGVRGGKPVALKENTDTAIDIAAKQYVMVNKVLVVRRTGGKVSWGRGRDLWYHQEVASVEPHCEPEPMNAEDPLFILYTSGSTGKPKGVLHTTGGYLVYASMTHQYVFDYHDGEIYWCTADVGWVTGHSYIVYGPLANGATTLMFEGVPNFPDQGRFWEVVDKHHVNIFYTAPTALRALMGAGDEFVTRSSRSTLRLLGSVGEPINPEAWEWYYNVVGDQKCPIVDTWWQTENGGILITPLPGATDLKPGSATRPFFGVKPVLVDNEGNVQEGVADGNLCISDSWPGQMRTVYGDHKRFIETYFSTYKGMYFSGDGCRRDEDGYYWITGRVDDVLNISGHRLGTAEIESALVSHHSVSEAAVVGYPHPIKGQGIYCYVTLMTGADAQDPDELRKELVQHVRKEIGPIATPDKIQFAPGLPKTRSGKIMRRILRKIAEDEFGALGDTSTLADPGVVDDLIENRQNKK.

CoA is bound by residues 189–192 (RGGK), Thr-311, and Asn-335. ATP contacts are provided by residues 387–389 (GEP), 411–416 (DTWWQT), Asp-500, and Arg-515. A CoA-binding site is contributed by Ser-523. Position 526 (Arg-526) interacts with ATP. Val-537, His-539, and Val-542 together coordinate Mg(2+). Arg-586 contributes to the CoA binding site. Residue Lys-611 is modified to N6-acetyllysine.

The protein belongs to the ATP-dependent AMP-binding enzyme family. The cofactor is Mg(2+). Post-translationally, acetylated. Deacetylation by the SIR2-homolog deacetylase activates the enzyme.

The catalysed reaction is acetate + ATP + CoA = acetyl-CoA + AMP + diphosphate. Its function is as follows. Catalyzes the conversion of acetate into acetyl-CoA (AcCoA), an essential intermediate at the junction of anabolic and catabolic pathways. AcsA undergoes a two-step reaction. In the first half reaction, AcsA combines acetate with ATP to form acetyl-adenylate (AcAMP) intermediate. In the second half reaction, it can then transfer the acetyl group from AcAMP to the sulfhydryl group of CoA, forming the product AcCoA. This is Acetyl-coenzyme A synthetase from Brucella abortus (strain S19).